We begin with the raw amino-acid sequence, 271 residues long: Orotidine 5'-phosphate decarboxylase (271 aa).

The Proton donor role is filled by Lys95.

It belongs to the OMP decarboxylase family. Type 2 subfamily.

The catalysed reaction is orotidine 5'-phosphate + H(+) = UMP + CO2. The protein operates within pyrimidine metabolism; UMP biosynthesis via de novo pathway; UMP from orotate: step 2/2. This Aromatoleum aromaticum (strain DSM 19018 / LMG 30748 / EbN1) (Azoarcus sp. (strain EbN1)) protein is Orotidine 5'-phosphate decarboxylase.